The chain runs to 484 residues: Muscarinic acetylcholine receptor M4 (484 aa).

Residues 1 to 32 (MENDTWENESSASNHSIDETIVEIPGKYQTME) are Extracellular-facing. 3 N-linked (GlcNAc...) asparagine glycosylation sites follow: asparagine 3, asparagine 8, and asparagine 14. Residues 33–55 (MIFIATVTGSLSLVTVVGNILVM) form a helical membrane-spanning segment. Over 56–69 (LSIKVNRQLQTVNN) the chain is Cytoplasmic. A helical transmembrane segment spans residues 70-90 (YFLFSLACADLIIGVFSMNLY). The Extracellular portion of the chain corresponds to 91 to 107 (SLYIIKGYWPLGPIVCD). The cysteines at positions 106 and 186 are disulfide-linked. The helical transmembrane segment at 108–129 (LWLALDYVVSNASVMNLLIISL) threads the bilayer. Residues 130–149 (ERXFCVTKPLTYPARRTTKM) lie on the Cytoplasmic side of the membrane. Residues 150–172 (AGLMIAAAWLLSFELWAPAILFW) traverse the membrane as a helical segment. At 173–194 (QFIVGQRTVPSGECYIQFLSNP) the chain is on the extracellular side. A helical membrane pass occupies residues 195-217 (AVTFGTAIAAFYLPVVIMTILYI). At 218 to 406 (HISLASRSRV…AAREKKVTRT (189 aa)) the chain is on the cytoplasmic side. Residues 255–316 (NIPKQDAGDK…EKQPLSEASS (62 aa)) form a disordered region. The segment covering 260–270 (DAGDKVVEKKN) has biased composition (basic and acidic residues). Residues 407–427 (IFAILLAFIITWTPYNVMVLI) form a helical membrane-spanning segment. At 428–441 (NTFCQTCIPETIWY) the chain is on the extracellular side. Residues 442 to 461 (IGYWLCYVNSTINPACYALC) form a helical membrane-spanning segment. The Cytoplasmic segment spans residues 462-484 (NATFKKTFKHLLMCQYKSIGTAR).

It belongs to the G-protein coupled receptor 1 family. Muscarinic acetylcholine receptor subfamily. CHRM4 sub-subfamily.

It is found in the cell membrane. The protein resides in the postsynaptic cell membrane. Its function is as follows. The muscarinic acetylcholine receptor mediates various cellular responses, including inhibition of adenylate cyclase, breakdown of phosphoinositides and modulation of potassium channels through the action of G proteins. Primary transducing effect is inhibition of adenylate cyclase. This chain is Muscarinic acetylcholine receptor M4 (chrm4), found in Xenopus laevis (African clawed frog).